We begin with the raw amino-acid sequence, 451 residues long: uncharacterized protein (451 aa).

The TRAM domain maps to 2–60 (VVKVKQKIPLKIKRMGINGEGIGFYQKTLVFVPGALKGEDIFCQITAVKRNFAEAKLLT). Cys73, Cys79, Cys82, and Cys162 together coordinate [4Fe-4S] cluster. Residues Gln283, Tyr312, Asp333, and Asp381 each coordinate S-adenosyl-L-methionine. Cys408 acts as the Nucleophile in catalysis.

The protein belongs to the class I-like SAM-binding methyltransferase superfamily. RNA M5U methyltransferase family.

This is an uncharacterized protein from Streptococcus pyogenes serotype M1.